Here is a 469-residue protein sequence, read N- to C-terminus: Uronate isomerase (469 aa).

The protein belongs to the metallo-dependent hydrolases superfamily. Uronate isomerase family.

It carries out the reaction D-glucuronate = D-fructuronate. It catalyses the reaction aldehydo-D-galacturonate = keto-D-tagaturonate. The protein operates within carbohydrate metabolism; pentose and glucuronate interconversion. The chain is Uronate isomerase from Mesorhizobium japonicum (strain LMG 29417 / CECT 9101 / MAFF 303099) (Mesorhizobium loti (strain MAFF 303099)).